Here is a 143-residue protein sequence, read N- to C-terminus: Holo-[acyl-carrier-protein] synthase (143 aa).

2 residues coordinate Mg(2+): Asp-8 and Glu-62.

Belongs to the P-Pant transferase superfamily. AcpS family. Mg(2+) is required as a cofactor.

The protein resides in the cytoplasm. The catalysed reaction is apo-[ACP] + CoA = holo-[ACP] + adenosine 3',5'-bisphosphate + H(+). In terms of biological role, transfers the 4'-phosphopantetheine moiety from coenzyme A to a Ser of acyl-carrier-protein. This is Holo-[acyl-carrier-protein] synthase from Cupriavidus metallidurans (strain ATCC 43123 / DSM 2839 / NBRC 102507 / CH34) (Ralstonia metallidurans).